Reading from the N-terminus, the 182-residue chain is Peptidyl-tRNA hydrolase (182 aa).

Tyr14 is a binding site for tRNA. Residue His19 is the Proton acceptor of the active site. Residues Phe64, Asn66, and Asn112 each coordinate tRNA.

Belongs to the PTH family. Monomer.

It is found in the cytoplasm. It carries out the reaction an N-acyl-L-alpha-aminoacyl-tRNA + H2O = an N-acyl-L-amino acid + a tRNA + H(+). Functionally, hydrolyzes ribosome-free peptidyl-tRNAs (with 1 or more amino acids incorporated), which drop off the ribosome during protein synthesis, or as a result of ribosome stalling. Its function is as follows. Catalyzes the release of premature peptidyl moieties from peptidyl-tRNA molecules trapped in stalled 50S ribosomal subunits, and thus maintains levels of free tRNAs and 50S ribosomes. In Wolbachia sp. subsp. Brugia malayi (strain TRS), this protein is Peptidyl-tRNA hydrolase.